Consider the following 176-residue polypeptide: Sec-independent protein translocase protein TatB (176 aa).

A helical transmembrane segment spans residues 1 to 21 (MLDLGLSKMALIGVVALVVLG). Residues 155–176 (QSGAARVARHQPASLRRPTRFL) are disordered.

The protein belongs to the TatB family. As to quaternary structure, the Tat system comprises two distinct complexes: a TatABC complex, containing multiple copies of TatA, TatB and TatC subunits, and a separate TatA complex, containing only TatA subunits. Substrates initially bind to the TatABC complex, which probably triggers association of the separate TatA complex to form the active translocon.

The protein localises to the cell inner membrane. Part of the twin-arginine translocation (Tat) system that transports large folded proteins containing a characteristic twin-arginine motif in their signal peptide across membranes. Together with TatC, TatB is part of a receptor directly interacting with Tat signal peptides. TatB may form an oligomeric binding site that transiently accommodates folded Tat precursor proteins before their translocation. This chain is Sec-independent protein translocase protein TatB, found in Burkholderia ambifaria (strain ATCC BAA-244 / DSM 16087 / CCUG 44356 / LMG 19182 / AMMD) (Burkholderia cepacia (strain AMMD)).